Here is a 303-residue protein sequence, read N- to C-terminus: Ribonuclease Z (303 aa).

7 residues coordinate Zn(2+): His61, His63, Asp65, His66, His139, Asp207, and His266. The Proton acceptor role is filled by Asp65.

Belongs to the RNase Z family. In terms of assembly, homodimer. Zn(2+) is required as a cofactor.

It carries out the reaction Endonucleolytic cleavage of RNA, removing extra 3' nucleotides from tRNA precursor, generating 3' termini of tRNAs. A 3'-hydroxy group is left at the tRNA terminus and a 5'-phosphoryl group is left at the trailer molecule.. Functionally, zinc phosphodiesterase, which displays some tRNA 3'-processing endonuclease activity. Probably involved in tRNA maturation, by removing a 3'-trailer from precursor tRNA. This chain is Ribonuclease Z, found in Clostridium kluyveri (strain ATCC 8527 / DSM 555 / NBRC 12016 / NCIMB 10680 / K1).